A 351-amino-acid chain; its full sequence is Methionine import ATP-binding protein MetN (351 aa).

The ABC transporter domain occupies 2-247; that stretch reads ITTSGLTKVY…PGSELAAALF (246 aa). 38 to 45 serves as a coordination point for ATP; it reads GQSGAGKS.

The protein belongs to the ABC transporter superfamily. Methionine importer (TC 3.A.1.24) family. The complex is composed of two ATP-binding proteins (MetN), two transmembrane proteins (MetI) and a solute-binding protein (MetQ).

The protein localises to the cell membrane. It catalyses the reaction L-methionine(out) + ATP + H2O = L-methionine(in) + ADP + phosphate + H(+). The enzyme catalyses D-methionine(out) + ATP + H2O = D-methionine(in) + ADP + phosphate + H(+). Part of the ABC transporter complex MetNIQ involved in methionine import. Responsible for energy coupling to the transport system. The polypeptide is Methionine import ATP-binding protein MetN (Streptomyces coelicolor (strain ATCC BAA-471 / A3(2) / M145)).